Consider the following 387-residue polypeptide: ATP phosphoribosyltransferase regulatory subunit (387 aa).

The protein belongs to the class-II aminoacyl-tRNA synthetase family. HisZ subfamily. Heteromultimer composed of HisG and HisZ subunits.

It localises to the cytoplasm. The protein operates within amino-acid biosynthesis; L-histidine biosynthesis; L-histidine from 5-phospho-alpha-D-ribose 1-diphosphate: step 1/9. Functionally, required for the first step of histidine biosynthesis. May allow the feedback regulation of ATP phosphoribosyltransferase activity by histidine. This is ATP phosphoribosyltransferase regulatory subunit from Methylobacillus flagellatus (strain ATCC 51484 / DSM 6875 / VKM B-1610 / KT).